A 238-amino-acid polypeptide reads, in one-letter code: Ribonuclease PH (238 aa).

Phosphate is bound by residues Arg86 and 124–126; that span reads GTR.

It belongs to the RNase PH family. Homohexameric ring arranged as a trimer of dimers.

The enzyme catalyses tRNA(n+1) + phosphate = tRNA(n) + a ribonucleoside 5'-diphosphate. Its function is as follows. Phosphorolytic 3'-5' exoribonuclease that plays an important role in tRNA 3'-end maturation. Removes nucleotide residues following the 3'-CCA terminus of tRNAs; can also add nucleotides to the ends of RNA molecules by using nucleoside diphosphates as substrates, but this may not be physiologically important. Probably plays a role in initiation of 16S rRNA degradation (leading to ribosome degradation) during starvation. The chain is Ribonuclease PH from Actinobacillus pleuropneumoniae serotype 7 (strain AP76).